The sequence spans 898 residues: Phosphoenolpyruvate carboxylase (898 aa).

Active-site residues include His134 and Lys564.

Belongs to the PEPCase type 1 family. Mg(2+) serves as cofactor.

The enzyme catalyses oxaloacetate + phosphate = phosphoenolpyruvate + hydrogencarbonate. Functionally, forms oxaloacetate, a four-carbon dicarboxylic acid source for the tricarboxylic acid cycle. This chain is Phosphoenolpyruvate carboxylase, found in Chromobacterium violaceum (strain ATCC 12472 / DSM 30191 / JCM 1249 / CCUG 213 / NBRC 12614 / NCIMB 9131 / NCTC 9757 / MK).